The sequence spans 690 residues: Eukaryotic translation initiation factor 3 subunit B (690 aa).

A compositionally biased stretch (basic and acidic residues) spans 1–11 (MAKKKSEDHSG). The tract at residues 1-37 (MAKKKSEDHSGGDANDSDYNEEPNFEDPPNFVDNISD) is disordered. The span at 15–25 (NDSDYNEEPNF) shows a compositional bias: acidic residues. Residues 57 to 141 (SVVVVDNIPK…HTFAVNLFTD (85 aa)) form the RRM domain. WD repeat units follow at residues 207–246 (TRER…KIQK), 247–289 (FPHT…EKRS), 293–331 (DGMS…LLDL), 334–369 (IKIP…TLME), 442–484 (EIRE…KPSL), and 530–575 (PDHF…IKRT). The stretch at 614–645 (QKDRLRLTRASKELLEKRSQLRETFMEYRNKR) forms a coiled coil.

This sequence belongs to the eIF-3 subunit B family. In terms of assembly, component of the eukaryotic translation initiation factor 3 (eIF-3) complex. The eIF-3 complex interacts with pix. Interacts with mxt.

The protein resides in the cytoplasm. Functionally, RNA-binding component of the eukaryotic translation initiation factor 3 (eIF-3) complex, which is involved in protein synthesis of a specialized repertoire of mRNAs and, together with other initiation factors, stimulates binding of mRNA and methionyl-tRNAi to the 40S ribosome. The eIF-3 complex specifically targets and initiates translation of a subset of mRNAs involved in cell proliferation. The protein is Eukaryotic translation initiation factor 3 subunit B of Drosophila pseudoobscura pseudoobscura (Fruit fly).